Reading from the N-terminus, the 261-residue chain is uncharacterized protein (261 aa).

This is an uncharacterized protein from Mycobacterium tuberculosis (strain CDC 1551 / Oshkosh).